The sequence spans 118 residues: Elongin-B (118 aa).

Met-1 is modified (N-acetylmethionine). The Ubiquitin-like domain maps to 1-66 (MDVFLMIRRH…LGECGFTSQT (66 aa)). Phosphothreonine is present on Thr-84. The tract at residues 92-118 (PFSSPPELPDVMKPQDSGSSANEQAVQ) is disordered. Polar residues predominate over residues 107–118 (DSGSSANEQAVQ). 2 positions are modified to phosphoserine: Ser-108 and Ser-111.

It belongs to the Elongin B family. Heterotrimer of an A (ELOA, ELOA2 or ELOA3P), ELOB and ELOC subunit. The elongin BC complex interacts with EPOP; leading to recruit the elongin BC complex to Polycomb group (PcG) target genes, thereby restricting excessive activity of the PRC2/EED-EZH2 complex. Component of multiple cullin-RING E3 ubiquitin-protein ligase complexes composed of Elongin BC (ELOB and ELOC), a cullin (either CUL2 or CUL5), a catalytic subunit (either RBX1 or RNF7/RBX2), as well as a substrate adapter protein that can be either ASB2, ASB9, ASB11, KLHDC2, KLHDC3, KLHDC10, APPBP2, FEM1A, FEM1B, FEM1C, LRR1, PCMTD1, SOCS1, SOCS2, SOCS5, SPSB1, SPSB3, ELOA, VHL, WSB1 or RAB40C. As part of the Elongin BC E3 ubiquitin ligase complex; interacts with NRBP1. May also interact with DCUN1D1, DCUN1D2, DCUN1D3 and DCUN1D5. May form oligomers as a KLHDC2/KLHDC3-ELOB-ELOC complex; this interaction is autoinhibitory for the E3 ligase complex as the substrate-binding site of KLHDC2/KLHDC3 is blocked in the oligomer. As to quaternary structure, (Microbial infection) Following infection by HIV-1 virus, component of a cullin-5-RING E3 ubiquitin-protein ligase complex (ECS complex) hijacked by the HIV-1 Vif protein. In terms of assembly, (Microbial infection) Substrate adapter protein can be a viral protein such as HIV Vif. (Microbial infection) Interacts with molluscum contagiosum virus MC132. As to quaternary structure, (Microbial infection) Interacts with herpes virus 8 virus protein LANA1.

It is found in the nucleus. Its pathway is protein modification; protein ubiquitination. Functionally, SIII, also known as elongin, is a general transcription elongation factor that increases the RNA polymerase II transcription elongation past template-encoded arresting sites. Subunit A is transcriptionally active and its transcription activity is strongly enhanced by binding to the dimeric complex of the SIII regulatory subunits B and C (elongin BC complex). In embryonic stem cells, the elongin BC complex is recruited by EPOP to Polycomb group (PcG) target genes in order generate genomic region that display both active and repressive chromatin properties, an important feature of pluripotent stem cells. In terms of biological role, core component of multiple cullin-2 and cullin-5-RING E3 ubiquitin-protein ligase complexes (ECS complexes), which mediate the ubiquitination of target proteins. By binding to BC-box motifs it seems to link target recruitment subunits, like VHL and members of the SOCS box family, to Cullin/RBX1 modules that activate E2 ubiquitination enzymes. Component the von Hippel-Lindau ubiquitination complex CBC(VHL). A number of ECS complexes (containing either KLHDC2, KLHDC3, KLHDC10, APPBP2, FEM1A, FEM1B or FEM1C as substrate-recognition component) are part of the DesCEND (destruction via C-end degrons) pathway, which recognizes a C-degron located at the extreme C terminus of target proteins, leading to their ubiquitination and degradation. The ECS(ASB9) complex mediates ubiquitination and degradation of CKB. As part of a multisubunit ubiquitin ligase complex, polyubiquitinates monoubiquitinated POLR2A. ECS(LRR1) ubiquitinates MCM7 and promotes CMG replisome disassembly by VCP and chromatin extraction during S-phase. As part of the ECS(RAB40C) complex, mediates ANKRD28 ubiquitination and degradation, thereby inhibiting protein phosphatase 6 (PP6) complex activity and focal adhesion assembly during cell migration. Its function is as follows. (Microbial infection) Following infection by HIV-1 virus, component of a cullin-5-RING E3 ubiquitin-protein ligase complex (ECS complex) hijacked by the HIV-1 Vif protein, which catalyzes ubiquitination and degradation of APOBEC3F and APOBEC3G. The complex can also ubiquitinate APOBEC3H to some extent. This Homo sapiens (Human) protein is Elongin-B.